We begin with the raw amino-acid sequence, 398 residues long: Protochlorophyllide reductase, chloroplastic (398 aa).

This sequence belongs to the short-chain dehydrogenases/reductases (SDR) family. POR subfamily.

The protein resides in the plastid. It is found in the chloroplast. It carries out the reaction chlorophyllide a + NADP(+) = protochlorophyllide a + NADPH + H(+). It participates in porphyrin-containing compound metabolism; chlorophyll biosynthesis. In terms of biological role, phototransformation of protochlorophyllide (Pchlide) to chlorophyllide (Chlide). This Daucus carota (Wild carrot) protein is Protochlorophyllide reductase, chloroplastic (POR1).